A 485-amino-acid chain; its full sequence is Probable RNA-binding protein 46 (485 aa).

3 consecutive RRM domains span residues 61–139 (CEVF…VSLD), 141–223 (CRLF…WADP), and 236–308 (KVLY…LAKP).

Interacts with YTHDC2, MEIOC, MOV10, CNOT6L, DDX4, UPF1 and PABPC1.

Its subcellular location is the cytoplasm. Essential for male and female fertility, playing a crucial role in regulating germ cell development by ensuring the proper progression of meiosis prophase I. Regulates mitotic-to-meiotic transition in spermatogenesis by forming a complex with MEIOC and YTHDC2 which recognizes and down-regulates mitotic transcripts for a successful meiotic entry. Required for normal synaptonemal complex formation during meiosis, binding meiotic cohesin subunit mRNAs containing GCCUAU/GUUCGA motifs in their 3'UTRs regions and positively regulating their translation. Required for spermatogonial differentiation in both developing and adult testis. In Macaca fascicularis (Crab-eating macaque), this protein is Probable RNA-binding protein 46 (RBM46).